Consider the following 291-residue polypeptide: HTH-type transcriptional activator AmpR (291 aa).

The HTH lysR-type domain occupies 6–63; the sequence is IPLNSLRAFEAAARHLSFTRAAIELNVTHSAISQHVKSLEQQLNCQLFVRGSRGLMLT. Residues 23–42 constitute a DNA-binding region (H-T-H motif); that stretch reads FTRAAIELNVTHSAISQHVK.

This sequence belongs to the LysR transcriptional regulatory family.

It localises to the cytoplasm. In terms of biological role, regulates the expression of the beta-lactamase gene. Represses cephalosporinase (AmpC) in the presence of beta-lactams and induces it in the absence of them. The protein is HTH-type transcriptional activator AmpR (ampR) of Citrobacter freundii.